Consider the following 115-residue polypeptide: uncharacterized protein (115 aa).

The protein belongs to the herpesviridae BLRF2 family.

This is an uncharacterized protein from Saimiriine herpesvirus 2 (strain 11) (SaHV-2).